We begin with the raw amino-acid sequence, 546 residues long: Putative inactive G-type lectin S-receptor-like serine/threonine-protein kinase SRK (546 aa).

Positions 1–31 (MRGELPNKHHSYTFFVFLFFFLILFPDLSIS) are cleaved as a signal peptide. The Extracellular portion of the chain corresponds to 32–441 (VNTLSATESL…FGERRTIRGK (410 aa)). In terms of domain architecture, Bulb-type lectin spans 34–154 (TLSATESLTI…KINESDEFLW (121 aa)). N-linked (GlcNAc...) asparagine glycans are attached at residues Asn46, Asn120, Asn147, and Asn243. In terms of domain architecture, EGF-like; atypical spans 293 to 329 (PKDTCDLYGICGPYAYCDMSTSPTCNCIKGFQPLSPQ). Intrachain disulfides connect Cys297–Cys309, Cys303–Cys317, Cys378–Cys403, and Cys382–Cys388. Residues 348–428 (CGEDRFFRLM…DGQDLFVRLA (81 aa)) enclose the PAN domain. Asn387 is a glycosylation site (N-linked (GlcNAc...) asparagine). A helical membrane pass occupies residues 442–462 (IIGLIIGISLMLVLSFIIYCF). Residues 463–546 (WKKKQKRARA…IVYKGRLLDG (84 aa)) are Cytoplasmic-facing. The Protein kinase domain maps to 524-546 (FSDSNILGRGGFGIVYKGRLLDG). Residue 530 to 538 (LGRGGFGIV) participates in ATP binding.

The protein belongs to the protein kinase superfamily. Ser/Thr protein kinase family.

It is found in the cell membrane. Truncated and inactivated form of SRK, the female specificity determinant of self-incompatibility when active. Most A.thaliana cultivars contain such an inactive form and thus, are self-fertiles. The protein is Putative inactive G-type lectin S-receptor-like serine/threonine-protein kinase SRK (PSEUDOSRKA) of Arabidopsis thaliana (Mouse-ear cress).